A 137-amino-acid chain; its full sequence is Proline-rich protein 13 (137 aa).

2 disordered regions span residues proline 26–proline 54 and valine 94–aspartate 137. The span at lysine 103–histidine 124 shows a compositional bias: basic residues. Residues serine 125–aspartate 137 show a composition bias toward low complexity.

The protein localises to the nucleus. Functionally, negatively regulates TSP1 expression at the level of transcription. This down-regulation was shown to reduce taxane-induced apoptosis. The protein is Proline-rich protein 13 (Prr13) of Mus musculus (Mouse).